Here is a 389-residue protein sequence, read N- to C-terminus: Succinate--CoA ligase [ADP-forming] subunit beta (389 aa).

Residues 9–236 (RDLFEKHGVP…KTTADPLEEK (228 aa)) form the ATP-grasp domain. ATP-binding positions include Lys-45, 52–54 (GRG), Ala-94, and Glu-99. Mg(2+)-binding residues include Asn-191 and Asp-205. Substrate-binding positions include Asn-256 and 318-320 (GIT).

The protein belongs to the succinate/malate CoA ligase beta subunit family. In terms of assembly, heterotetramer of two alpha and two beta subunits. Requires Mg(2+) as cofactor.

It carries out the reaction succinate + ATP + CoA = succinyl-CoA + ADP + phosphate. The catalysed reaction is GTP + succinate + CoA = succinyl-CoA + GDP + phosphate. It participates in carbohydrate metabolism; tricarboxylic acid cycle; succinate from succinyl-CoA (ligase route): step 1/1. Succinyl-CoA synthetase functions in the citric acid cycle (TCA), coupling the hydrolysis of succinyl-CoA to the synthesis of either ATP or GTP and thus represents the only step of substrate-level phosphorylation in the TCA. The beta subunit provides nucleotide specificity of the enzyme and binds the substrate succinate, while the binding sites for coenzyme A and phosphate are found in the alpha subunit. In Kocuria rhizophila (strain ATCC 9341 / DSM 348 / NBRC 103217 / DC2201), this protein is Succinate--CoA ligase [ADP-forming] subunit beta.